Here is a 111-residue protein sequence, read N- to C-terminus: Ribonuclease P protein component (111 aa).

It belongs to the RnpA family. Consists of a catalytic RNA component (M1 or rnpB) and a protein subunit.

It carries out the reaction Endonucleolytic cleavage of RNA, removing 5'-extranucleotides from tRNA precursor.. In terms of biological role, RNaseP catalyzes the removal of the 5'-leader sequence from pre-tRNA to produce the mature 5'-terminus. It can also cleave other RNA substrates such as 4.5S RNA. The protein component plays an auxiliary but essential role in vivo by binding to the 5'-leader sequence and broadening the substrate specificity of the ribozyme. The chain is Ribonuclease P protein component from Borrelia garinii subsp. bavariensis (strain ATCC BAA-2496 / DSM 23469 / PBi) (Borreliella bavariensis).